Consider the following 327-residue polypeptide: Malate dehydrogenase (327 aa).

Residue 12–18 (GAAGQIG) participates in NAD(+) binding. Substrate is bound by residues Arg93 and Arg99. NAD(+) contacts are provided by residues Asn106, Gln113, and 130–132 (VGN). Residues Asn132 and Arg163 each contribute to the substrate site. His188 serves as the catalytic Proton acceptor.

The protein belongs to the LDH/MDH superfamily. MDH type 2 family.

The catalysed reaction is (S)-malate + NAD(+) = oxaloacetate + NADH + H(+). Functionally, catalyzes the reversible oxidation of malate to oxaloacetate. The sequence is that of Malate dehydrogenase from Paraburkholderia phymatum (strain DSM 17167 / CIP 108236 / LMG 21445 / STM815) (Burkholderia phymatum).